Here is a 265-residue protein sequence, read N- to C-terminus: Shikimate dehydrogenase (NADP(+)) (265 aa).

Shikimate is bound by residues 15-17 and Thr62; that span reads SKS. Residue Lys66 is the Proton acceptor of the active site. Positions 87 and 102 each coordinate shikimate. NADP(+) is bound by residues 127–131, 151–156, and Met212; these read GAGGA and NRTVSR. Shikimate is bound at residue Tyr214. Residue Gly234 participates in NADP(+) binding.

The protein belongs to the shikimate dehydrogenase family. Homodimer.

The catalysed reaction is shikimate + NADP(+) = 3-dehydroshikimate + NADPH + H(+). Its pathway is metabolic intermediate biosynthesis; chorismate biosynthesis; chorismate from D-erythrose 4-phosphate and phosphoenolpyruvate: step 4/7. In terms of biological role, involved in the biosynthesis of the chorismate, which leads to the biosynthesis of aromatic amino acids. Catalyzes the reversible NADPH linked reduction of 3-dehydroshikimate (DHSA) to yield shikimate (SA). This is Shikimate dehydrogenase (NADP(+)) from Thiobacillus denitrificans (strain ATCC 25259 / T1).